A 431-amino-acid polypeptide reads, in one-letter code: Galactose-3-O-sulfotransferase 3 (431 aa).

Residues 1–19 (MPPILQRLQQSTKMMSHRK) are Cytoplasmic-facing. The helical; Signal-anchor for type II membrane protein transmembrane segment at 20-40 (ILLLVLGCSTVSLLIHQGSQL) threads the bilayer. The Lumenal segment spans residues 41–431 (SWYPKLFPLS…RALPRIPQGT (391 aa)). Asn-91, Asn-110, Asn-177, and Asn-302 each carry an N-linked (GlcNAc...) asparagine glycan. Positions 400–431 (KRRGGVRSRPESVLDNPPPRPIRALPRIPQGT) are disordered. A compositionally biased stretch (low complexity) spans 421–431 (IRALPRIPQGT).

This sequence belongs to the galactose-3-O-sulfotransferase family. Requires Mg(2+) as cofactor.

Its subcellular location is the golgi apparatus. It is found in the golgi stack membrane. Its pathway is protein modification; carbohydrate sulfation. In terms of biological role, transfers a sulfate to position 3 of non-reducing beta-galactosyl residues in N-glycans and core2-branched O-glycans. Has high activity towards Gal-beta-1,4-GlcNAc, Gal-beta-1,4(Fuc-alpha-1,3)GlcNAc and lower activity towards Gal-beta-1,3(Fuc-alpha-1,4)GlcNAc. In Mus musculus (Mouse), this protein is Galactose-3-O-sulfotransferase 3 (Gal3st3).